We begin with the raw amino-acid sequence, 259 residues long: Acetylglutamate kinase (259 aa).

Substrate is bound by residues Gly-46–Gly-47, Arg-68, and Asn-162.

Belongs to the acetylglutamate kinase family. ArgB subfamily.

It localises to the cytoplasm. It carries out the reaction N-acetyl-L-glutamate + ATP = N-acetyl-L-glutamyl 5-phosphate + ADP. Its pathway is amino-acid biosynthesis; L-arginine biosynthesis; N(2)-acetyl-L-ornithine from L-glutamate: step 2/4. Its function is as follows. Catalyzes the ATP-dependent phosphorylation of N-acetyl-L-glutamate. The protein is Acetylglutamate kinase of Roseiflexus castenholzii (strain DSM 13941 / HLO8).